A 524-amino-acid polypeptide reads, in one-letter code: Probable aminopeptidase NPEPL1 (524 aa).

The Zn(2+) site is built by lysine 260 and aspartate 265. Lysine 272 is a catalytic residue. Zn(2+) contacts are provided by aspartate 283, aspartate 342, and glutamate 344. The active site involves arginine 346.

Belongs to the peptidase M17 family. The cofactor is Zn(2+). It depends on Mn(2+) as a cofactor.

Functionally, probably catalyzes the removal of unsubstituted N-terminal amino acids from various peptides. This Mus musculus (Mouse) protein is Probable aminopeptidase NPEPL1 (Npepl1).